A 508-amino-acid chain; its full sequence is Photosystem II CP47 reaction center protein (508 aa).

6 consecutive transmembrane segments (helical) span residues 21–36 (SVHIMHTALVSGWAGS), 101–115 (IVFSGLCFLAAIWHW), 140–156 (GIHLFLSGVACFGFGAF), 203–218 (IAAGTLGILAGLFHLS), 237–252 (VLSSSIAAVFFAAFVV), and 457–472 (TFALLFFFGHIWHGAR).

This sequence belongs to the PsbB/PsbC family. PsbB subfamily. PSII is composed of 1 copy each of membrane proteins PsbA, PsbB, PsbC, PsbD, PsbE, PsbF, PsbH, PsbI, PsbJ, PsbK, PsbL, PsbM, PsbT, PsbX, PsbY, PsbZ, Psb30/Ycf12, at least 3 peripheral proteins of the oxygen-evolving complex and a large number of cofactors. It forms dimeric complexes. It depends on Binds multiple chlorophylls. PSII binds additional chlorophylls, carotenoids and specific lipids. as a cofactor.

It localises to the plastid. The protein localises to the chloroplast thylakoid membrane. In terms of biological role, one of the components of the core complex of photosystem II (PSII). It binds chlorophyll and helps catalyze the primary light-induced photochemical processes of PSII. PSII is a light-driven water:plastoquinone oxidoreductase, using light energy to abstract electrons from H(2)O, generating O(2) and a proton gradient subsequently used for ATP formation. The chain is Photosystem II CP47 reaction center protein from Chloranthus spicatus (Chulantree).